We begin with the raw amino-acid sequence, 58 residues long: U11-myrmicitoxin-Tb1a (58 aa).

Positions 1-24 are excised as a propeptide; that stretch reads LAMAMGDAVADAQARAMAAAYAIA. Cysteines 34 and 57 form a disulfide.

It belongs to the formicidae venom precursor-01 superfamily. Expressed by the venom gland.

It is found in the secreted. The protein localises to the target cell membrane. Functionally, neurotoxin that causes irreversible rapid flaccid paralysis in blowflies and honeybees upon intrathoracic injection. Causes a quick and irreversible cytolytic effect (at 10 uM) indicating it possibly acts as a pore-forming peptide. Shows only weak effect on aphids (A.pisum) at high doses 24 hours post intrathoracic injection. In vitro, is not cytotoxic on the dipteran S2 Drosophila embryonic cell line. This chain is U11-myrmicitoxin-Tb1a, found in Tetramorium bicarinatum (Tramp ant).